The chain runs to 314 residues: MATELDKIFLILEIAEFIIGMLGNVFIGLVNCSEGIKNQKVFSADFILTCLAISTIGQLFVILFDSFLVGLASHLYTTYRLGKPVIMLWHMTNHLTTWLATCLSIFYFFKIAHFPHSLFLWLRWRMNGMIVMLLILSLFLLIFDSLVLEIFIDISLNIIDKSNLTLYLDESKTLYDKLSILKTLLSLTSFIPFSLSLTSLLFFFLSLVRHTRNLKLSSLGSRDSSTEAHRRAMKMVMSFLFLFIVHFFSLQVANWIFFMLWNNKYIKFAMLALNAFPSCHSFILILGNSKLRQTAVRLLWHLRNYTKTPNALPL.

The Extracellular portion of the chain corresponds to 1–7 (MATELDK). The helical transmembrane segment at 8-28 (IFLILEIAEFIIGMLGNVFIG) threads the bilayer. Residues 29 to 50 (LVNCSEGIKNQKVFSADFILTC) are Cytoplasmic-facing. Residues 51 to 71 (LAISTIGQLFVILFDSFLVGL) traverse the membrane as a helical segment. The Extracellular portion of the chain corresponds to 72–101 (ASHLYTTYRLGKPVIMLWHMTNHLTTWLAT). A helical membrane pass occupies residues 102 to 122 (CLSIFYFFKIAHFPHSLFLWL). Residues 123–127 (RWRMN) lie on the Cytoplasmic side of the membrane. Residues 128-148 (GMIVMLLILSLFLLIFDSLVL) traverse the membrane as a helical segment. Topologically, residues 149–187 (EIFIDISLNIIDKSNLTLYLDESKTLYDKLSILKTLLSL) are extracellular. An N-linked (GlcNAc...) asparagine glycan is attached at N163. Residues 188-208 (TSFIPFSLSLTSLLFFFLSLV) traverse the membrane as a helical segment. Topologically, residues 209-238 (RHTRNLKLSSLGSRDSSTEAHRRAMKMVMS) are cytoplasmic. The helical transmembrane segment at 239–259 (FLFLFIVHFFSLQVANWIFFM) threads the bilayer. At 260–265 (LWNNKY) the chain is on the extracellular side. The helical transmembrane segment at 266–286 (IKFAMLALNAFPSCHSFILIL) threads the bilayer. Over 287-314 (GNSKLRQTAVRLLWHLRNYTKTPNALPL) the chain is Cytoplasmic.

The protein belongs to the G-protein coupled receptor T2R family.

Its subcellular location is the membrane. Its function is as follows. Receptor that may play a role in the perception of bitterness and is gustducin-linked. May play a role in sensing the chemical composition of the gastrointestinal content. The activity of this receptor may stimulate alpha gustducin, mediate PLC-beta-2 activation and lead to the gating of TRPM5. This Pan paniscus (Pygmy chimpanzee) protein is Taste receptor type 2 member 42 (TAS2R42).